The following is a 554-amino-acid chain: Sesquithujene synthase A (554 aa).

Mg(2+) is bound by residues aspartate 308 and aspartate 312. The substrate site is built by aspartate 308 and aspartate 312. Positions 308-312 (DDMFD) match the DDXXD motif motif. The segment at 407 to 411 (SIGAN) is determine the stereoselectivity of the enzyme. Substrate is bound by residues arginine 449 and asparagine 452. 3 residues coordinate Mg(2+): asparagine 452, serine 456, and glutamate 460.

It belongs to the terpene synthase family. In terms of assembly, monomer. Mg(2+) is required as a cofactor. Requires Mn(2+) as cofactor. As to expression, highly expressed in the husk. Detected in leaves.

The protein resides in the cytoplasm. The catalysed reaction is (2E,6E)-farnesyl diphosphate = sesquithujene + diphosphate. It carries out the reaction (2Z,6Z)-farnesyl diphosphate = (1S,5S,6S)-alpha-bergamotene + diphosphate. The enzyme catalyses (2E,6E)-farnesyl diphosphate = (E)-beta-farnesene + diphosphate. It catalyses the reaction (2E,6E)-farnesyl diphosphate = (S)-beta-bisabolene + diphosphate. The catalysed reaction is (2Z,6E)-farnesyl diphosphate = (-)-beta-curcumene + diphosphate. It carries out the reaction (2E,6E)-farnesyl diphosphate = gamma-curcumene + diphosphate. The enzyme catalyses (2E,6E)-farnesyl diphosphate = sesquisabinene B + diphosphate. It functions in the pathway secondary metabolite biosynthesis; terpenoid biosynthesis. Functionally, sesquiterpene synthase involved in the production after herbivore attack of a blend of volatiles that attracts natural enemies of herbivores. Converts farnesyl diphosphate to sesquithujene, (S)-beta-bisabolene, (Z)-alpha-bergamotene, sesquisabinene B and several minor products. Can also act in vitro as a monoterpene synthase, converting geranyl diphosphate to (S)-(-)-limonene, beta-myrcene and 11 other monoterpenes. In Zea mays (Maize), this protein is Sesquithujene synthase A.